The following is a 196-amino-acid chain: MSYYAFEGLIPVVHPTAFVHPSAVLIGYVIVGAGVYIGPLASLRGDYGRLIVQAGANIQDGCIMHGYCDTDTIVGENGHIGHGAILHGCVIGRDALVGMNSVIMDGAVIGEESIVAAMSFVKAGFHGEKRQLLMGTPARAVRSVSDDELHWKRLNTKEYQDLVGRCHASLHETQPLRQMEENRPRLQGTTDVTPKR.

A disordered region spans residues 173-196 (TQPLRQMEENRPRLQGTTDVTPKR). Residues 187-196 (QGTTDVTPKR) are compositionally biased toward polar residues.

The protein belongs to the transferase hexapeptide repeat family.

It functions in the pathway amine and polyamine metabolism; carnitine metabolism. Functionally, overproduction of CaiE stimulates the activity of CaiB and CaiD. This is Carnitine operon protein CaiE from Shigella dysenteriae serotype 1 (strain Sd197).